Consider the following 392-residue polypeptide: Mycofactocin maturase MftC (392 aa).

A Radical SAM core domain is found at 18–228 (LDAPICLTWE…YDWLVAKGDR (211 aa)). The [4Fe-4S] cluster site is built by C32, C36, C39, C253, C260, C271, C312, C315, C321, C325, and C343. The segment covering 354–367 (KERVKPKPSGDHSR) has biased composition (basic and acidic residues). The disordered stretch occupies residues 354–377 (KERVKPKPSGDHSRGTKQGPVALK).

This sequence belongs to the radical SAM superfamily. MftC family. The cofactor is [4Fe-4S] cluster.

The enzyme catalyses [mycofactocin precursor peptide]-C-terminal glycyl-L-valyl-L-tyrosine + S-adenosyl-L-methionine = [mycofactocin precursor peptide]-C-terminal glycyl-N-{[2-(4-hydroxyphenyl)ethenyl]-3-methylbutanamide} + 5'-deoxyadenosine + L-methionine + CO2. The catalysed reaction is [mycofactocin precursor peptide]-C-terminal glycyl-N-{[2-(4-hydroxyphenyl)ethenyl]-3-methylbutanamide} + AH2 + S-adenosyl-L-methionine = [mycofactocin precursor peptide]-C-terminal glycyl-N-{5-[(4-hydroxyphenyl)methyl]-4,4-dimethyl-2-oxopyrrolidin-3-yl}acetamide + 5'-deoxyadenosine + L-methionine + A + H(+). Its function is as follows. Radical S-adenosylmethionine (SAM) enzyme responsible for the first step of the biosynthesis of the enzyme cofactor mycofactocin (MFT). Catalyzes two reactions at the C-terminus of the mycofactocin precursor (the MftA peptide). The first one is the oxidative decarboxylation of the C-terminal L-tyrosine of MftA, forming an unsaturated tyramine moiety. The second reaction is the cross-linking of the tyramine with the penultimate L-valine residue, forming a five-membered lactam ring. Its activity requires the presence of the MftB chaperone. Is required for the in vivo ethanol assimilation in M.smegmatis. The sequence is that of Mycofactocin maturase MftC from Mycolicibacterium smegmatis (strain ATCC 700084 / mc(2)155) (Mycobacterium smegmatis).